Consider the following 171-residue polypeptide: Shikimate kinase (171 aa).

14–19 (GAGKST) contacts ATP. Ser-18 provides a ligand contact to Mg(2+). Residues Asp-36, Arg-60, and Gly-82 each coordinate substrate. Arg-120 serves as a coordination point for ATP. Arg-139 is a substrate binding site. Gln-156 lines the ATP pocket.

It belongs to the shikimate kinase family. In terms of assembly, monomer. Requires Mg(2+) as cofactor.

It localises to the cytoplasm. The enzyme catalyses shikimate + ATP = 3-phosphoshikimate + ADP + H(+). It functions in the pathway metabolic intermediate biosynthesis; chorismate biosynthesis; chorismate from D-erythrose 4-phosphate and phosphoenolpyruvate: step 5/7. Its function is as follows. Catalyzes the specific phosphorylation of the 3-hydroxyl group of shikimic acid using ATP as a cosubstrate. The sequence is that of Shikimate kinase from Shewanella oneidensis (strain ATCC 700550 / JCM 31522 / CIP 106686 / LMG 19005 / NCIMB 14063 / MR-1).